A 766-amino-acid chain; its full sequence is 5-methyltetrahydropteroyltriglutamate--homocysteine methyltransferase (766 aa).

5-methyltetrahydropteroyltri-L-glutamate is bound by residues 23-26 (RELK) and lysine 121. L-homocysteine is bound by residues 438–440 (IGS) and glutamate 491. L-methionine-binding positions include 438 to 440 (IGS) and glutamate 491. 5-methyltetrahydropteroyltri-L-glutamate is bound by residues 522 to 523 (RC) and tryptophan 568. L-homocysteine is bound at residue aspartate 606. L-methionine is bound at residue aspartate 606. Residue glutamate 612 participates in 5-methyltetrahydropteroyltri-L-glutamate binding. Zn(2+) contacts are provided by histidine 648, cysteine 650, and glutamate 672. Histidine 701 acts as the Proton donor in catalysis. Zn(2+) is bound at residue cysteine 733.

It belongs to the vitamin-B12 independent methionine synthase family. Requires Zn(2+) as cofactor.

It catalyses the reaction 5-methyltetrahydropteroyltri-L-glutamate + L-homocysteine = tetrahydropteroyltri-L-glutamate + L-methionine. It functions in the pathway amino-acid biosynthesis; L-methionine biosynthesis via de novo pathway; L-methionine from L-homocysteine (MetE route): step 1/1. Catalyzes the transfer of a methyl group from 5-methyltetrahydrofolate to homocysteine resulting in methionine formation. The polypeptide is 5-methyltetrahydropteroyltriglutamate--homocysteine methyltransferase (Photobacterium profundum (strain SS9)).